A 792-amino-acid polypeptide reads, in one-letter code: 5-methyltetrahydropteroyltriglutamate--homocysteine methyltransferase (792 aa).

5-methyltetrahydropteroyltri-L-glutamate-binding positions include 16–19 (RELK) and Lys-112. L-homocysteine contacts are provided by residues 432–434 (IGS) and Glu-485. L-methionine-binding positions include 432 to 434 (IGS) and Glu-485. 5-methyltetrahydropteroyltri-L-glutamate-binding positions include 516–517 (RC) and Trp-562. Asp-600 serves as a coordination point for L-homocysteine. Asp-600 contributes to the L-methionine binding site. Glu-606 serves as a coordination point for 5-methyltetrahydropteroyltri-L-glutamate. Residues His-642, Cys-644, and Glu-666 each contribute to the Zn(2+) site. His-695 acts as the Proton donor in catalysis. Cys-727 contacts Zn(2+).

It belongs to the vitamin-B12 independent methionine synthase family. Zn(2+) serves as cofactor.

It carries out the reaction 5-methyltetrahydropteroyltri-L-glutamate + L-homocysteine = tetrahydropteroyltri-L-glutamate + L-methionine. It participates in amino-acid biosynthesis; L-methionine biosynthesis via de novo pathway; L-methionine from L-homocysteine (MetE route): step 1/1. In terms of biological role, catalyzes the transfer of a methyl group from 5-methyltetrahydrofolate to homocysteine resulting in methionine formation. This is 5-methyltetrahydropteroyltriglutamate--homocysteine methyltransferase from Cupriavidus necator (Alcaligenes eutrophus).